The primary structure comprises 302 residues: Urease accessory protein UreD 2 (302 aa).

This sequence belongs to the UreD family. In terms of assembly, ureD, UreF and UreG form a complex that acts as a GTP-hydrolysis-dependent molecular chaperone, activating the urease apoprotein by helping to assemble the nickel containing metallocenter of UreC. The UreE protein probably delivers the nickel.

It is found in the cytoplasm. Its function is as follows. Required for maturation of urease via the functional incorporation of the urease nickel metallocenter. The polypeptide is Urease accessory protein UreD 2 (Brucella melitensis biotype 1 (strain ATCC 23456 / CCUG 17765 / NCTC 10094 / 16M)).